A 292-amino-acid chain; its full sequence is Transmembrane and ubiquitin-like domain-containing protein 1 (292 aa).

A helical transmembrane segment spans residues 11–31 (VTLLFGVVFLVLVLVLAWAST). The tract at residues 34–143 (VEPPEHLLSP…TQPSAEDAAS (110 aa)) is disordered. The segment covering 71-80 (VRDEDDKSEP) has biased composition (basic and acidic residues). The span at 84 to 94 (AGAAGQSADGS) shows a compositional bias: low complexity. One can recognise a Ubiquitin-like domain in the interval 149–222 (MVLRLKFLND…LHCHISQHAT (74 aa)). 2 helical membrane-spanning segments follow: residues 237–257 (VALN…SVLW) and 269–289 (APAT…AFGV).

The protein localises to the membrane. It is found in the cytoplasm. It localises to the nucleus. May contribute to the regulation of translation during cell-cycle progression. May contribute to the regulation of cell proliferation. The membrane form is involved in sterol-regulated ubiquitination and degradation of HMG-CoA reductase HMGCR. May be involved in centrosome assembly. This chain is Transmembrane and ubiquitin-like domain-containing protein 1 (tmub1), found in Danio rerio (Zebrafish).